Consider the following 320-residue polypeptide: Ferrochelatase (320 aa).

2 residues coordinate Fe cation: H194 and E275.

Belongs to the ferrochelatase family. Monomer.

Its subcellular location is the cytoplasm. The catalysed reaction is heme b + 2 H(+) = protoporphyrin IX + Fe(2+). It functions in the pathway porphyrin-containing compound metabolism; protoheme biosynthesis; protoheme from protoporphyrin-IX: step 1/1. Its function is as follows. Catalyzes the ferrous insertion into protoporphyrin IX. This is Ferrochelatase from Escherichia coli O127:H6 (strain E2348/69 / EPEC).